A 180-amino-acid polypeptide reads, in one-letter code: Thebaine synthase 1 (180 aa).

Residue S96 participates in thebaine binding. The active-site Proton acceptor is H111. T127 is a thebaine binding site.

It belongs to the MLP family. In terms of assembly, homodimer (allosteric) and oligomers. Expressed in poppy latex.

The catalysed reaction is (7S)-O-acetylsalutaridinol = thebaine + acetate + H(+). Its pathway is alkaloid biosynthesis; morphine biosynthesis. Catalyzes the formation of thebaine from (7S)-salutaridinol 7-O-acetate at the expense of labile hydroxylated by-products, which are preferentially produced by spontaneous allylic elimination. This is Thebaine synthase 1 from Papaver somniferum (Opium poppy).